Here is a 317-residue protein sequence, read N- to C-terminus: Tyrosine--tRNA ligase (317 aa).

An L-tyrosine-binding site is contributed by Tyr33. The short motif at 38-46 (PSGKIHMGH) is the 'HIGH' region element. Residues Tyr155, Gln159, Asp162, and Gln177 each coordinate L-tyrosine. Residues 211 to 215 (KMASS) carry the 'KMSKS' region motif. Residue Ser214 coordinates ATP.

The protein belongs to the class-I aminoacyl-tRNA synthetase family. TyrS type 3 subfamily. Homodimer.

It localises to the cytoplasm. The catalysed reaction is tRNA(Tyr) + L-tyrosine + ATP = L-tyrosyl-tRNA(Tyr) + AMP + diphosphate + H(+). Its function is as follows. Catalyzes the attachment of tyrosine to tRNA(Tyr) in a two-step reaction: tyrosine is first activated by ATP to form Tyr-AMP and then transferred to the acceptor end of tRNA(Tyr). In Methanosarcina barkeri (strain Fusaro / DSM 804), this protein is Tyrosine--tRNA ligase.